The following is a 212-amino-acid chain: ATP-dependent dethiobiotin synthetase BioD (212 aa).

Residue 10-15 (GVGKTF) participates in ATP binding. Residue Thr14 participates in Mg(2+) binding. Residue Lys36 is part of the active site. Ser40 contacts substrate. ATP contacts are provided by residues Asp45, 106 to 109 (EGAG), and 167 to 168 (NC). Residues Asp45 and Glu106 each contribute to the Mg(2+) site.

It belongs to the dethiobiotin synthetase family. In terms of assembly, homodimer. Mg(2+) serves as cofactor.

It is found in the cytoplasm. It catalyses the reaction (7R,8S)-7,8-diammoniononanoate + CO2 + ATP = (4R,5S)-dethiobiotin + ADP + phosphate + 3 H(+). It participates in cofactor biosynthesis; biotin biosynthesis; biotin from 7,8-diaminononanoate: step 1/2. In terms of biological role, catalyzes a mechanistically unusual reaction, the ATP-dependent insertion of CO2 between the N7 and N8 nitrogen atoms of 7,8-diaminopelargonic acid (DAPA, also called 7,8-diammoniononanoate) to form a ureido ring. This is ATP-dependent dethiobiotin synthetase BioD from Methanococcus aeolicus (strain ATCC BAA-1280 / DSM 17508 / OCM 812 / Nankai-3).